A 412-amino-acid polypeptide reads, in one-letter code: Divalent metal cation transporter MntH (412 aa).

Transmembrane regions (helical) follow at residues 19–39, 46–66, 94–114, 122–142, 156–176, 196–216, 241–261, 290–310, 329–349, 350–370, and 389–409; these read LALM…GNFA, ASFG…AMLI, VWFY…AEFI, LILG…TFLI, VIGG…IFSQ, AVFL…IYLH, IAMT…AAAF, VFGL…TLAG, TITM…TRIL, VMSQ…LLIF, and IGWM…VGTA.

Belongs to the NRAMP family.

The protein resides in the cell inner membrane. Functionally, h(+)-stimulated, divalent metal cation uptake system. The sequence is that of Divalent metal cation transporter MntH from Citrobacter koseri (strain ATCC BAA-895 / CDC 4225-83 / SGSC4696).